We begin with the raw amino-acid sequence, 496 residues long: MFS transporter cpaT (496 aa).

Residues 1-45 (MGHQEEPPRICKTPSGHEQGEGPAEKTSKPSTEEVGWDGPTDPAR) are disordered. Residues 18–32 (EQGEGPAEKTSKPST) show a composition bias toward basic and acidic residues. N-linked (GlcNAc...) asparagine glycosylation is present at Asn48. The chain crosses the membrane as a helical span at residues 58–78 (MGIISYLTFLTPLTSSIVAPA). Asn90 is a glycosylation site (N-linked (GlcNAc...) asparagine). Helical transmembrane passes span 93–113 (LASF…LFLA), 130–150 (FIFT…ALLV), 154–174 (FAGI…ADMF), 180–200 (GVAM…GPIA), and 212–232 (WVFW…LFVL). Residue Asn252 is glycosylated (N-linked (GlcNAc...) asparagine). 6 helical membrane-spanning segments follow: residues 288–308 (VALF…LFTT), 325–345 (GLVY…FGAL), 367–387 (LPPL…YGWS), 395–415 (IMPI…LLPI), 427–449 (AASA…PLAG), and 463–483 (SLLG…YFYG).

The protein belongs to the major facilitator superfamily.

The protein localises to the membrane. In terms of biological role, MFS transporter; part of the gene cluster that mediates the biosynthesis of the fungal neurotoxin cyclopiazonic acid (CPA), a nanomolar inhibitor of Ca(2+)-ATPase with a unique pentacyclic indole tetramic acid scaffold. The chain is MFS transporter cpaT from Aspergillus oryzae (Yellow koji mold).